The following is a 435-amino-acid chain: NADH-quinone oxidoreductase subunit D (435 aa).

Belongs to the complex I 49 kDa subunit family. In terms of assembly, NDH-1 is composed of 14 different subunits. Subunits NuoB, C, D, E, F, and G constitute the peripheral sector of the complex.

Its subcellular location is the cell inner membrane. It carries out the reaction a quinone + NADH + 5 H(+)(in) = a quinol + NAD(+) + 4 H(+)(out). Its function is as follows. NDH-1 shuttles electrons from NADH, via FMN and iron-sulfur (Fe-S) centers, to quinones in the respiratory chain. The immediate electron acceptor for the enzyme in this species is believed to be ubiquinone. Couples the redox reaction to proton translocation (for every two electrons transferred, four hydrogen ions are translocated across the cytoplasmic membrane), and thus conserves the redox energy in a proton gradient. The chain is NADH-quinone oxidoreductase subunit D from Xylella fastidiosa (strain M23).